The sequence spans 23 residues: Potassium channel toxin kappa-KTx 1.2 (23 aa).

2 cysteine pairs are disulfide-bonded: C4/C22 and C8/C18. The residue at position 22 (C22) is a Cysteine amide.

This sequence belongs to the short scorpion toxin superfamily. Potassium channel inhibitor kappa-KTx family. Kappa-KTx 1 subfamily. Post-translationally, the two disulfide isomers globular (C1-C3, C2-C4) and beads (C1-C2, C3-C4) do not show activity on Kv10.1/KCNH1/EAG1. In terms of tissue distribution, expressed by the venom gland.

The protein resides in the secreted. Functionally, shows weak blocking activity on voltage-gated potassium channels Kv10.1/KCNH1/EAG1 (IC(50)=26 uM), Kv1.2/KCNA2 (Kd=150 uM), Kv1.3/KCNA3 (Kd=40 uM), Kv1.6/KCNA3 (16.6% inhibition at 40 uM toxin). The block is dose-dependent, voltage-independent, and reversible. Also shows a weak inhibitory activity on the plant pathogen F.culmorum growth (IC(50)=18.8-37.7 uM). In Chersonesometrus fulvipes (Indian black scorpion), this protein is Potassium channel toxin kappa-KTx 1.2.